The sequence spans 977 residues: Receptor-like protein kinase 7 (977 aa).

The N-terminal stretch at 1-28 is a signal peptide; the sequence is MAPSLRNFNFFHRFSTFLVFSLFSVVSS. The Extracellular segment spans residues 29–608; the sequence is DDLQVLLKLK…NPSRSHGDTR (580 aa). 3 LRR repeats span residues 71-95, 96-119, and 121-145; these read RGNV…SVCE, IQSL…DLKN, and TSLK…SLNQ. Asparagine 73 and asparagine 119 each carry an N-linked (GlcNAc...) asparagine glycan. N-linked (GlcNAc...) asparagine glycans are attached at residues asparagine 152 and asparagine 167. LRR repeat units follow at residues 168-194, 195-218, 219-242, 244-265, 267-289, 290-312, 313-337, 339-361, 362-385, 386-409, 411-433, 434-457, 458-481, 482-505, 507-529, 530-553, and 555-578; these read ATSL…VVSL, KKLS…IGDL, TELR…ISKL, NLWQ…GFGN, KNLT…LRSL, TNLV…EFGE, FKDL…LGSL, DFDF…MCKN, GKMK…YANC, LTLQ…LWGL, KLEI…IKNG, KMLG…IGDT, ESLT…IGKL, KGLS…IGSC, MLSD…LGSL, PTLN…LSSL, and LSLL…SYNG. A glycan (N-linked (GlcNAc...) asparagine) is linked at asparagine 204. N-linked (GlcNAc...) asparagine glycosylation is found at asparagine 252 and asparagine 268. Residue asparagine 318 is glycosylated (N-linked (GlcNAc...) asparagine). Asparagine 373 and asparagine 399 each carry an N-linked (GlcNAc...) asparagine glycan. Residues asparagine 536 and asparagine 577 are each glycosylated (N-linked (GlcNAc...) asparagine). A helical transmembrane segment spans residues 609-629; the sequence is VFVLCIVFGLLILLASLVFFL. The Cytoplasmic portion of the chain corresponds to 630-977; it reads YLKKTEKKEG…ESDVKVKEIS (348 aa). In terms of domain architecture, Protein kinase spans 666 to 959; it reads IKEENLIGRG…QMIEDAEPCR (294 aa). Residues 672–680 and lysine 694 each bind ATP; that span reads IGRGGCGDV. Residue aspartate 805 is the Proton acceptor of the active site.

It belongs to the protein kinase superfamily. Ser/Thr protein kinase family. As to quaternary structure, interacts with PIP1. In terms of tissue distribution, expressed in roots, stems and dry seeds. Expressed at junctions between organs, such as the insertion zones of stamens, petals and sepals, the transition zones of floral stem and pedicel, pedicel and silique, and floral stem and cauline leaves.

Its subcellular location is the membrane. It catalyses the reaction L-seryl-[protein] + ATP = O-phospho-L-seryl-[protein] + ADP + H(+). The catalysed reaction is L-threonyl-[protein] + ATP = O-phospho-L-threonyl-[protein] + ADP + H(+). In terms of biological role, plays a role in pattern-triggered immunity (PTI) signaling induced by pathogen-associated molecular patterns (PAMPs). Acts as a receptor for PIP1 defense peptide. PIP1 is an endogenous secreted peptide that acts as elicitor of immune response and positive regulator of defense response. Involved in the control of seed germination speed, in tolerance to oxidative stress and in maintaining seed longevity. The chain is Receptor-like protein kinase 7 from Arabidopsis thaliana (Mouse-ear cress).